The sequence spans 452 residues: Nuclear distribution protein PAC1 (452 aa).

The LisH domain occupies 12–44 (QKDELHKAILAYFSASGLSNTGAALREELGVGD). The stretch at 64-91 (TGVLRLQKKIMELESRLSSLQSELDSAT) forms a coiled coil. WD repeat units follow at residues 117-158 (SHRN…RTVK), 160-200 (HTKA…KNIR), 204-245 (GHDH…CVKT), 248-287 (GHSD…HKAT), 290-350 (GHEH…LKTL), 352-391 (GHDN…RCVK), 396-435 (AHSH…INVR), and 437-452 (VIAT…VFAS).

Belongs to the WD repeat LIS1/nudF family. Self-associates. Interacts with NDL1 and dynein.

Its subcellular location is the cytoplasm. It is found in the cytoskeleton. The protein resides in the spindle pole. In terms of biological role, positively regulates the activity of the minus-end directed microtubule motor protein dynein. May enhance dynein-mediated microtubule sliding by targeting dynein to the microtubule plus end. Required for nuclear migration during vegetative growth as well as development. Required for retrograde early endosome (EE) transport from the hyphal tip. Required for localization of dynein to the mitotic spindle poles. Recruits additional proteins to the dynein complex at SPBs. This Tuber melanosporum (strain Mel28) (Perigord black truffle) protein is Nuclear distribution protein PAC1.